The chain runs to 149 residues: Large ribosomal subunit protein bL9 (149 aa).

It belongs to the bacterial ribosomal protein bL9 family.

Its function is as follows. Binds to the 23S rRNA. This Xylella fastidiosa (strain 9a5c) protein is Large ribosomal subunit protein bL9.